The chain runs to 293 residues: Phosphatidylserine decarboxylase proenzyme (293 aa).

Catalysis depends on charge relay system; for autoendoproteolytic cleavage activity residues D90, H147, and S254. The active-site Schiff-base intermediate with substrate; via pyruvic acid; for decarboxylase activity is S254. Pyruvic acid (Ser); by autocatalysis is present on S254.

The protein belongs to the phosphatidylserine decarboxylase family. PSD-B subfamily. Prokaryotic type I sub-subfamily. In terms of assembly, heterodimer of a large membrane-associated beta subunit and a small pyruvoyl-containing alpha subunit. The cofactor is pyruvate. Post-translationally, is synthesized initially as an inactive proenzyme. Formation of the active enzyme involves a self-maturation process in which the active site pyruvoyl group is generated from an internal serine residue via an autocatalytic post-translational modification. Two non-identical subunits are generated from the proenzyme in this reaction, and the pyruvate is formed at the N-terminus of the alpha chain, which is derived from the carboxyl end of the proenzyme. The autoendoproteolytic cleavage occurs by a canonical serine protease mechanism, in which the side chain hydroxyl group of the serine supplies its oxygen atom to form the C-terminus of the beta chain, while the remainder of the serine residue undergoes an oxidative deamination to produce ammonia and the pyruvoyl prosthetic group on the alpha chain. During this reaction, the Ser that is part of the protease active site of the proenzyme becomes the pyruvoyl prosthetic group, which constitutes an essential element of the active site of the mature decarboxylase.

Its subcellular location is the cell membrane. It carries out the reaction a 1,2-diacyl-sn-glycero-3-phospho-L-serine + H(+) = a 1,2-diacyl-sn-glycero-3-phosphoethanolamine + CO2. It participates in phospholipid metabolism; phosphatidylethanolamine biosynthesis; phosphatidylethanolamine from CDP-diacylglycerol: step 2/2. Its function is as follows. Catalyzes the formation of phosphatidylethanolamine (PtdEtn) from phosphatidylserine (PtdSer). The sequence is that of Phosphatidylserine decarboxylase proenzyme from Yersinia enterocolitica serotype O:8 / biotype 1B (strain NCTC 13174 / 8081).